The primary structure comprises 119 residues: Large ribosomal subunit protein bL20 (119 aa).

This sequence belongs to the bacterial ribosomal protein bL20 family.

Binds directly to 23S ribosomal RNA and is necessary for the in vitro assembly process of the 50S ribosomal subunit. It is not involved in the protein synthesizing functions of that subunit. The sequence is that of Large ribosomal subunit protein bL20 from Nitrosospira multiformis (strain ATCC 25196 / NCIMB 11849 / C 71).